Consider the following 632-residue polypeptide: Phosphatidylinositol 3,4,5-trisphosphate 3-phosphatase and protein-tyrosine-phosphatase PTEN2B (632 aa).

The span at 1–12 (METDPANSSSKS) shows a compositional bias: polar residues. The disordered stretch occupies residues 1–98 (METDPANSSS…RESPPSIFSS (98 aa)). Basic and acidic residues predominate over residues 39–48 (SAEREAHEDS). Residues 63 to 73 (MPASSTGSEPL) show a composition bias toward polar residues. Over residues 87-98 (SPRESPPSIFSS) the composition is skewed to low complexity. A Phosphatase tensin-type domain is found at 189–368 (RRYQEGEFDL…KYYERVQNQF (180 aa)). Catalysis depends on Cys307, which acts as the Phosphocysteine intermediate. The region spanning 375–502 (ERRCMLRGFR…FHVEIVMIEP (128 aa)) is the C2 tensin-type domain. The disordered stretch occupies residues 504 to 603 (NSQPTKSKSD…SGHYNPIPNN (100 aa)). The segment covering 505–527 (SQPTKSKSDSTQQQSQSSSSADS) has biased composition (low complexity). Acidic residues predominate over residues 535-549 (KDDDVFSDSDGEEEG). Ser541 bears the Phosphoserine mark. Over residues 550–571 (NSQSYSTNEKTASSMHTTSKPH) the composition is skewed to polar residues. Over residues 584–594 (ANRSVTSSSSS) the composition is skewed to low complexity.

The protein belongs to the PTEN phosphatase protein family. Expressed, at low levels, in seedlings, roots, stems, leaves, flowers and siliques. However, at protein level, not observed in older leaves, flowers and siliques.

It carries out the reaction O-phospho-L-tyrosyl-[protein] + H2O = L-tyrosyl-[protein] + phosphate. The enzyme catalyses a 1,2-diacyl-sn-glycero-3-phospho-(1D-myo-inositol-3,4,5-trisphosphate) + H2O = a 1,2-diacyl-sn-glycero-3-phospho-(1D-myo-inositol-4,5-bisphosphate) + phosphate. Functionally, protein tyrosine phosphatase that also exhibits a weak lipid phosphatase activity towards PtdIns(3)P. The protein is Phosphatidylinositol 3,4,5-trisphosphate 3-phosphatase and protein-tyrosine-phosphatase PTEN2B of Arabidopsis thaliana (Mouse-ear cress).